A 503-amino-acid polypeptide reads, in one-letter code: Opine oxidase subunit A (503 aa).

To T-protein and to dimethylglycine dehydrogenase. In terms of assembly, heterodimer of a subunit A and a subunit B.

The protein operates within opine metabolism; octopine degradation. Oxidative cleavage of octopine into L-arginine and pyruvate. This Agrobacterium tumefaciens (strain Ach5) protein is Opine oxidase subunit A (ooxA).